The following is a 426-amino-acid chain: Serine--tRNA ligase (426 aa).

Threonine 231 to glutamate 233 is an L-serine binding site. Arginine 262–glutamate 264 is a binding site for ATP. Glutamate 285 contacts L-serine. Glutamate 349–serine 352 is a binding site for ATP. Serine 385 lines the L-serine pocket.

This sequence belongs to the class-II aminoacyl-tRNA synthetase family. Type-1 seryl-tRNA synthetase subfamily. Homodimer. The tRNA molecule binds across the dimer.

It localises to the cytoplasm. The enzyme catalyses tRNA(Ser) + L-serine + ATP = L-seryl-tRNA(Ser) + AMP + diphosphate + H(+). It catalyses the reaction tRNA(Sec) + L-serine + ATP = L-seryl-tRNA(Sec) + AMP + diphosphate + H(+). Its pathway is aminoacyl-tRNA biosynthesis; selenocysteinyl-tRNA(Sec) biosynthesis; L-seryl-tRNA(Sec) from L-serine and tRNA(Sec): step 1/1. Functionally, catalyzes the attachment of serine to tRNA(Ser). Is also able to aminoacylate tRNA(Sec) with serine, to form the misacylated tRNA L-seryl-tRNA(Sec), which will be further converted into selenocysteinyl-tRNA(Sec). In Saccharophagus degradans (strain 2-40 / ATCC 43961 / DSM 17024), this protein is Serine--tRNA ligase.